A 203-amino-acid polypeptide reads, in one-letter code: Na(+)-translocating NADH-quinone reductase subunit E (203 aa).

Transmembrane regions (helical) follow at residues 11-31 (SIFI…FLAV), 35-55 (ISTA…TVPL), 82-102 (FLGL…LEMF), 115-135 (GIFL…LFMV), 145-165 (MVYG…MAGV), and 181-201 (LGIT…FSGI).

It belongs to the NqrDE/RnfAE family. As to quaternary structure, composed of six subunits; NqrA, NqrB, NqrC, NqrD, NqrE and NqrF.

It is found in the cell inner membrane. The catalysed reaction is a ubiquinone + n Na(+)(in) + NADH + H(+) = a ubiquinol + n Na(+)(out) + NAD(+). Functionally, NQR complex catalyzes the reduction of ubiquinone-1 to ubiquinol by two successive reactions, coupled with the transport of Na(+) ions from the cytoplasm to the periplasm. NqrA to NqrE are probably involved in the second step, the conversion of ubisemiquinone to ubiquinol. In Dichelobacter nodosus (strain VCS1703A), this protein is Na(+)-translocating NADH-quinone reductase subunit E.